A 55-amino-acid polypeptide reads, in one-letter code: Large ribosomal subunit protein bL33 (55 aa).

Belongs to the bacterial ribosomal protein bL33 family.

The sequence is that of Large ribosomal subunit protein bL33 from Buchnera aphidicola subsp. Schizaphis graminum (strain Sg).